We begin with the raw amino-acid sequence, 296 residues long: Elongation factor Ts (296 aa).

The segment at 81-84 is involved in Mg(2+) ion dislocation from EF-Tu; the sequence is TDFV.

The protein belongs to the EF-Ts family.

The protein resides in the cytoplasm. Associates with the EF-Tu.GDP complex and induces the exchange of GDP to GTP. It remains bound to the aminoacyl-tRNA.EF-Tu.GTP complex up to the GTP hydrolysis stage on the ribosome. This Ruthia magnifica subsp. Calyptogena magnifica protein is Elongation factor Ts.